The primary structure comprises 170 residues: Macro domain-containing protein VPA0103 (170 aa).

The Macro domain maps to 1-170; sequence MNAISLVQGD…SIWQHALTQH (170 aa).

It belongs to the MacroD-type family.

This chain is Macro domain-containing protein VPA0103, found in Vibrio parahaemolyticus serotype O3:K6 (strain RIMD 2210633).